We begin with the raw amino-acid sequence, 70 residues long: Small ribosomal subunit protein bS21C (70 aa).

Residues 38–70 (YEKPTTERKRKKAAAVARLRKQVRRSMPPKKKY) are disordered. Positions 45-70 (RKRKKAAAVARLRKQVRRSMPPKKKY) are enriched in basic residues.

It belongs to the bacterial ribosomal protein bS21 family.

The protein is Small ribosomal subunit protein bS21C of Burkholderia thailandensis (strain ATCC 700388 / DSM 13276 / CCUG 48851 / CIP 106301 / E264).